The following is a 323-amino-acid chain: Dihydrodiol dehydrogenase 3 (323 aa).

Residues 20 to 24 (GFGTF) and Asp50 contribute to the NADP(+) site. Tyr55 acts as the Proton donor in catalysis. His117 serves as a coordination point for substrate. NADP(+) contacts are provided by residues 166–167 (SN), Gln190, 216–221 (YGALGS), and 270–280 (KSYNKKRIKEN).

This sequence belongs to the aldo/keto reductase family.

It localises to the cytoplasm. The protein is Dihydrodiol dehydrogenase 3 of Bos taurus (Bovine).